A 298-amino-acid polypeptide reads, in one-letter code: Putative ankyrin repeat-containing protein TP_0502 (298 aa).

ANK repeat units lie at residues 143–172, 176–205, 210–239, and 243–272; these read CFEE…SAAL, RGTP…PVDQ, RAYS…DPNV, and NGQT…NPYL.

The sequence is that of Putative ankyrin repeat-containing protein TP_0502 from Treponema pallidum (strain Nichols).